Reading from the N-terminus, the 561-residue chain is uncharacterized protein (561 aa).

A run of 6 helical transmembrane segments spans residues 27 to 49 (ILEF…GLLI), 54 to 71 (FFGI…ALAL), 83 to 105 (LVYQ…SEFF), 115 to 137 (LTLF…IKLF), 142 to 162 (IIGA…AAMV), and 177 to 199 (VVGY…AIGA). Residues 292-373 (QQDVPIEDTD…MSEVRRFLGD (82 aa)) enclose the RCK C-terminal domain. The next 4 membrane-spanning stretches (helical) occupy residues 383-405 (LMPF…PLPG), 409-428 (LSLG…GALN), 441-463 (ASRT…SAGV), and 478-500 (IAGG…MPLF).

The protein belongs to the AAE transporter (TC 2.A.81) family.

Its subcellular location is the cell membrane. This is an uncharacterized protein from Corynebacterium diphtheriae (strain ATCC 700971 / NCTC 13129 / Biotype gravis).